The chain runs to 448 residues: Leukocyte immunoglobulin-like receptor subfamily B member 4 (448 aa).

The first 21 residues, 1–21 (MIPTFTALLCLGLSLGPRTHM), serve as a signal peptide directing secretion. Topologically, residues 22–259 (QAGPLPKPTL…PHSGLRRHWE (238 aa)) are extracellular. Ig-like C2-type domains lie at 27-118 (PKPT…LVMT) and 124-218 (PTLS…LIVS). 2 disulfides stabilise this stretch: Cys49–Cys98 and Cys144–Cys195. The disordered stretch occupies residues 217-248 (VSGSLEDPRPSPTRSVSTAAGPEDQPLMPTGS). The chain crosses the membrane as a helical span at residues 260–280 (VLIGVLVVSILLLSLLLFLLL). The Cytoplasmic segment spans residues 281–448 (QHWRQGKHRT…PSVYATLAIH (168 aa)). Positions 297–448 (DFQRPPGAAE…PSVYATLAIH (152 aa)) are disordered. Ser319 carries the phosphoserine modification. A compositionally biased stretch (basic and acidic residues) spans 344-354 (MDTRQSPHDED). An ITIM motif 1 motif is present at residues 358–363 (VTYAKV). Positions 384-398 (LDTKDRQAEEDRQMD) are enriched in basic and acidic residues. Short sequence motifs (ITIM motif) lie at residues 410-415 (VTYAQL) and 440-445 (SVYATL).

Interacts with PTPN6. As to expression, detected on monocytes, macrophages, dendritic cells, natural killer cells and B-cells (at protein level). Expressed in the lung.

Its subcellular location is the cell membrane. Its function is as follows. Inhibitory receptor involved in the down-regulation of the immune response and the development of immune tolerance. Receptor for FN1. Receptor for apolipoprotein APOE. Receptor for ALCAM/CD166. Inhibits receptor-mediated phosphorylation of cellular proteins and mobilization of intracellular calcium ions. Inhibits FCGR1A/CD64-mediated monocyte activation by inducing phosphatase-mediated down-regulation of the phosphorylation of multiple proteins including LCK, SYK, LAT and ERK, leading to a reduction in TNF production. This inhibition of monocyte activation occurs at least in part via binding to FN1. Inhibits T cell proliferation, inducing anergy, suppressing the differentiation of IFNG-producing CD8+ cytotoxic T cells and enhancing the generation of CD8+ T suppressor cells. Induces up-regulation of CD86 on dendritic cells. Interferes with TNFRSF5-signaling and NF-kappa-B up-regulation. This chain is Leukocyte immunoglobulin-like receptor subfamily B member 4 (LILRB4), found in Homo sapiens (Human).